A 569-amino-acid chain; its full sequence is Nucleoprotein (569 aa).

The binding site for the cap structure m7GTP stretch occupies residues 54-241; the sequence is MRKERRDDND…IDTKKSSLNI (188 aa). Mn(2+) contacts are provided by Asp389 and Glu391. Zn(2+)-binding residues include Glu399, Cys506, His509, and Cys529. Asp533 provides a ligand contact to Mn(2+).

It belongs to the arenaviridae nucleocapsid protein family. Homomultimerizes to form the nucleocapsid. Binds to viral genomic RNA. Interacts with glycoprotein G2. Interacts with protein Z; this interaction probably directs the encapsidated genome to budding sites. Interacts with protein L; this interaction does not interfere with Z-L interaction. Interacts with host IKBKE (via Protein kinase domain); the interaction inhibits IKBKE kinase activity.

The protein resides in the virion. It localises to the host cytoplasm. In terms of biological role, encapsidates the genome, protecting it from nucleases. The encapsidated genomic RNA is termed the nucleocapsid (NC). Serves as template for viral transcription and replication. The increased presence of protein N in host cell does not seem to trigger the switch from transcription to replication as observed in other negative strain RNA viruses. Through the interaction with host IKBKE, strongly inhibits the phosphorylation and nuclear translocation of host IRF3, a protein involved in interferon activation pathway, leading to the inhibition of interferon-beta and IRF3-dependent promoters activation. Also encodes a functional 3'-5' exoribonuclease that degrades preferentially dsRNA substrates and thereby participates in the suppression of interferon induction. The protein is Nucleoprotein of Lassa virus (strain Mouse/Sierra Leone/Josiah/1976) (LASV).